Consider the following 343-residue polypeptide: MGLLERLRKEWFIVGIILVIAAAKLEPTVGVKGGPLKPEITITYIAVSAIFFNSGLSLKTEELTNALMHVKLHLFVQLFTLVFFPTAIWLFLQVLSLTPINEWLLKGLQTVSCMPPPVSSAVILTKAVGGNEAAAIFNSAFGSFLGIVVTPLLLLLFLGSSSSVPFTSIFSQLFMTVVVPLIIGQIVRRYIKDWLERKKPPFGAISSCVLLMIIYTTFCDTFSNPNIDLDTFSLVVIVFIIFFIQLAFMLLTFLFSTSKNSGFTPADTVAIVFCSTHKSLTLGIPMLKIVFVGYEHLSLISVPLLIYHPAQILLGSVLVPTIKSWMLSRQKALKLTRQPKIPL.

The Cytoplasmic segment spans residues 1–10; that stretch reads MGLLERLRKE. A helical membrane pass occupies residues 11–31; the sequence is WFIVGIILVIAAAKLEPTVGV. Residues 32–37 are Extracellular-facing; it reads KGGPLK. A helical membrane pass occupies residues 38–58; that stretch reads PEITITYIAVSAIFFNSGLSL. At 59–71 the chain is on the cytoplasmic side; sequence KTEELTNALMHVK. Residues 72-92 form a helical membrane-spanning segment; the sequence is LHLFVQLFTLVFFPTAIWLFL. The Extracellular segment spans residues 93–116; that stretch reads QVLSLTPINEWLLKGLQTVSCMPP. The helical transmembrane segment at 117–137 threads the bilayer; it reads PVSSAVILTKAVGGNEAAAIF. Asparagine 138 is a topological domain (cytoplasmic). A helical transmembrane segment spans residues 139-159; it reads SAFGSFLGIVVTPLLLLLFLG. The Extracellular segment spans residues 160–163; sequence SSSS. Residues 164-184 form a helical membrane-spanning segment; the sequence is VPFTSIFSQLFMTVVVPLIIG. At 185-201 the chain is on the cytoplasmic side; that stretch reads QIVRRYIKDWLERKKPP. Residues 202-222 form a helical membrane-spanning segment; the sequence is FGAISSCVLLMIIYTTFCDTF. The Extracellular segment spans residues 223–234; it reads SNPNIDLDTFSL. The chain crosses the membrane as a helical span at residues 235–255; the sequence is VVIVFIIFFIQLAFMLLTFLF. Topologically, residues 256-270 are cytoplasmic; that stretch reads STSKNSGFTPADTVA. A helical membrane pass occupies residues 271 to 291; it reads IVFCSTHKSLTLGIPMLKIVF. The Extracellular segment spans residues 292 to 298; that stretch reads VGYEHLS. The chain crosses the membrane as a helical span at residues 299–319; sequence LISVPLLIYHPAQILLGSVLV. Residues 320 to 343 are Cytoplasmic-facing; the sequence is PTIKSWMLSRQKALKLTRQPKIPL.

The protein belongs to the bile acid:sodium symporter (BASS) (TC 2.A.28) family. In terms of tissue distribution, strongly expressed in small intestine. Moderately expressed in spleen. Weakly expressed in skeletal muscle. Not detected in other tissues tested.

It is found in the cell membrane. The protein resides in the endoplasmic reticulum membrane. The protein localises to the golgi apparatus membrane. Its function is as follows. Involved in teeth and skeletal development. Has an essential role in the biosynthesis and trafficking of glycosaminoglycans and glycoproteins to produce a proper functioning extracellular matrix. Required for extracellular matrix mineralization. Also involved in the regulation of cellular calcium homeostasis. Does not show transport activity towards bile acids or steroid sulfates. This chain is Sodium/bile acid cotransporter 7-A (slc10a7-a), found in Xenopus laevis (African clawed frog).